The chain runs to 752 residues: uncharacterized protein (752 aa).

Phosphoserine occurs at positions 202 and 582. The disordered stretch occupies residues 596–752 (EEEKESVEVE…KTGEDGEIVL (157 aa)). 2 stretches are compositionally biased toward basic and acidic residues: residues 601-613 (SVEVEEGKHKNDL) and 641-677 (LKSEDDNTSEASKDPSSHVKSPENIEKLKQNDDHFEV). Residues 695-718 (NNVAETILEVTSSPKSSENSQKQS) are compositionally biased toward polar residues. A phosphoserine mark is found at serine 707 and serine 738.

This is an uncharacterized protein from Schizosaccharomyces pombe (strain 972 / ATCC 24843) (Fission yeast).